Consider the following 318-residue polypeptide: MKIKQAIDKIPGGLMLVPLFLGALCNTFTPGAGKYLGSFSNGLITGTIPILAVWFFCMGASIELKATGTMLKKSGVLVITKLATAWVVALIAGTFLPGDGIQNGLLAGISVLALVAAMDMTNGGLYAALMNQYGSKEEAGAFVLMSLESGPLMTMVILGASGIATFEPQLFVGAVLPFLIGFTLGNLDPDLRKLFGNSVQTLIPFFAFALGNTINLAVILQTGFAGIFLGVLVIVVTGIPLIIADKFIGGGNGTAGVAASSSAGAAVATPLLIANMAPEFAPVAQQATALVATSVIVTSVLVPVITALWAKRFSPKHA.

10 helical membrane passes run 10–30 (IPGG…TFTP), 42–62 (GLIT…GASI), 76–96 (VLVI…GTFL), 105–125 (LLAG…NGGL), 139–159 (AGAF…VILG), 162–182 (GIAT…LIGF), 199–219 (VQTL…LAVI), 224–244 (FAGI…LIIA), 263–283 (AGAA…FAPV), and 289–309 (ALVA…TALW).

The protein belongs to the KdgT transporter family.

It localises to the cell inner membrane. It carries out the reaction 2-dehydro-3-deoxy-D-gluconate(in) + H(+)(in) = 2-dehydro-3-deoxy-D-gluconate(out) + H(+)(out). Functionally, catalyzes the proton-dependent uptake of 2-keto-3-deoxygluconate (KDG) into the cell. This Pectobacterium carotovorum subsp. carotovorum (strain PC1) protein is 2-keto-3-deoxygluconate permease.